A 178-amino-acid polypeptide reads, in one-letter code: NADPH azoreductase (178 aa).

106-111 serves as a coordination point for NADP(+); sequence GGGKGG.

Belongs to the azoreductase type 2 family. In terms of assembly, monomer.

The enzyme catalyses N,N-dimethyl-1,4-phenylenediamine + aniline + 2 NADP(+) = 4-(dimethylamino)azobenzene + 2 NADPH + 2 H(+). Its function is as follows. Catalyzes the reductive cleavage of azo bond in aromatic azo compounds to the corresponding amines. Requires NADPH as an electron donor for its activity. Compounds with paired naphthalene groups coupled with the azo group are good substrates, with the following preference order: Rocceline &gt; Sumifix Black B &gt; Solar Orange. This chain is NADPH azoreductase (azr), found in Bacillus sp. (strain OY1-2).